Consider the following 351-residue polypeptide: uncharacterized protein (351 aa).

His-23, His-25, Lys-151, His-184, His-212, and Asp-270 together coordinate Zn(2+). An N6-carboxylysine modification is found at Lys-151.

Belongs to the metallo-dependent hydrolases superfamily. Phosphotriesterase family. Zn(2+) serves as cofactor.

This is an uncharacterized protein from Mycoplasma pneumoniae (strain ATCC 29342 / M129 / Subtype 1) (Mycoplasmoides pneumoniae).